The primary structure comprises 812 residues: Axin-2 (812 aa).

The interval 1–43 (MNRTLTDPMVSSFREDDPRPPVPGEEGETTCHHPSKLAMMRPK) is disordered. The RGS domain maps to 84-203 (SLHFLLGDQD…LTSDIYLEYV (120 aa)). Disordered stretches follow at residues 275–326 (SYRR…AIPP), 388–430 (ETMS…TCEE), 446–484 (TPGCQSPGLLRHSPRSRSPEQRPLPRGGLSTRSQSSSMN), and 609–726 (RQTK…SGCH). A compositionally biased stretch (polar residues) spans 285 to 303 (NRFTSGYSFAPATSANDSE). A compositionally biased stretch (low complexity) spans 305-323 (SSDALTDDSMSMTDSSVDA). The interval 329 to 415 (LGSKKQLQRE…RDESEMSSSS (87 aa)) is interaction with GSK3B. Over residues 388-397 (ETMSSLEERL) the composition is skewed to basic and acidic residues. Positions 401–410 (QEEEERDESE) are enriched in acidic residues. Residues 411–421 (MSSSSASHSLP) are compositionally biased toward low complexity. Positions 415-467 (SASHSLPLLPPGTCEEDPQAILDEHLSRVLKTPGCQSPGLLRHSPRSRSPEQR) are interaction with beta-catenin. Over residues 475-484 (STRSQSSSMN) the composition is skewed to polar residues. Residues 672-683 (EEARRRLEEVSK) show a composition bias toward basic and acidic residues. The DIX domain occupies 730–812 (GSETVVTYFF…KILGKVDRMD (83 aa)).

Interacts with hwa; leading to promote the tankyrase-mediated degradation of axin1. In terms of processing, ADP-ribosylated by tankyrase tnks and tnks2. Poly-ADP-ribosylated protein is recognized by rnf146, followed by ubiquitination and subsequent activation of the Wnt signaling pathway. Ubiquitinated by rnf146 when poly-ADP-ribosylated, leading to its degradation and subsequent activation of the Wnt signaling pathway.

The protein localises to the cytoplasm. Component of the beta-catenin destruction complex required for regulating ctnnb1 levels through phosphorylation and ubiquitination, and modulating Wnt-signaling. Controls dorsoventral patterning by down-regulating ctnnb1 to inhibit the Wnt signaling pathway and ventralize embryos. This chain is Axin-2 (axin2), found in Danio rerio (Zebrafish).